A 389-amino-acid polypeptide reads, in one-letter code: Phosphoglycerate kinase (389 aa).

Substrate contacts are provided by residues 19–21 (DYN), arginine 34, 57–60 (HLGR), arginine 117, and arginine 150. ATP-binding positions include lysine 200, glycine 288, glutamate 319, and 347-350 (GGDS).

This sequence belongs to the phosphoglycerate kinase family. As to quaternary structure, monomer.

The protein resides in the cytoplasm. The enzyme catalyses (2R)-3-phosphoglycerate + ATP = (2R)-3-phospho-glyceroyl phosphate + ADP. It functions in the pathway carbohydrate degradation; glycolysis; pyruvate from D-glyceraldehyde 3-phosphate: step 2/5. The sequence is that of Phosphoglycerate kinase from Deinococcus geothermalis (strain DSM 11300 / CIP 105573 / AG-3a).